Here is a 103-residue protein sequence, read N- to C-terminus: Small ribosomal subunit protein uS10 (103 aa).

It belongs to the universal ribosomal protein uS10 family. As to quaternary structure, part of the 30S ribosomal subunit.

Functionally, involved in the binding of tRNA to the ribosomes. The chain is Small ribosomal subunit protein uS10 from Bordetella avium (strain 197N).